Consider the following 429-residue polypeptide: Ribosomal RNA small subunit methyltransferase B (429 aa).

Residues 254-260 (CAAPGGK), Asp-277, Asp-303, and Asp-322 each bind S-adenosyl-L-methionine. Catalysis depends on Cys-375, which acts as the Nucleophile.

It belongs to the class I-like SAM-binding methyltransferase superfamily. RsmB/NOP family.

Its subcellular location is the cytoplasm. The catalysed reaction is cytidine(967) in 16S rRNA + S-adenosyl-L-methionine = 5-methylcytidine(967) in 16S rRNA + S-adenosyl-L-homocysteine + H(+). Specifically methylates the cytosine at position 967 (m5C967) of 16S rRNA. This chain is Ribosomal RNA small subunit methyltransferase B, found in Yersinia enterocolitica serotype O:8 / biotype 1B (strain NCTC 13174 / 8081).